The sequence spans 128 residues: uncharacterized protein (128 aa).

A run of 2 helical transmembrane segments spans residues Leu33–Val53 and Phe61–Tyr81. Positions Asp99–Phe120 are enriched in polar residues. The segment at Asp99 to Asp128 is disordered.

Its subcellular location is the membrane. This is an uncharacterized protein from Schizosaccharomyces pombe (strain 972 / ATCC 24843) (Fission yeast).